An 882-amino-acid chain; its full sequence is DNA mismatch repair protein MutS (882 aa).

629–636 (GPNMGGKS) lines the ATP pocket.

This sequence belongs to the DNA mismatch repair MutS family.

This protein is involved in the repair of mismatches in DNA. It is possible that it carries out the mismatch recognition step. This protein has a weak ATPase activity. The polypeptide is DNA mismatch repair protein MutS (Ralstonia nicotianae (strain ATCC BAA-1114 / GMI1000) (Ralstonia solanacearum)).